Reading from the N-terminus, the 808-residue chain is Receptor like protein 27 (808 aa).

Positions 1 to 31 (MLFFIKVFMKTILSVLLLFFIFASSFTLVVG) are cleaved as a signal peptide. Over 32–740 (LAGCRPDQIQ…DEDEEVLNWK (709 aa)) the chain is Extracellular. 7 N-linked (GlcNAc...) asparagine glycosylation sites follow: asparagine 56, asparagine 68, asparagine 90, asparagine 103, asparagine 108, asparagine 144, and asparagine 167. LRR repeat units follow at residues 96–120 (LQHL…GFGN), 122–144 (NRLE…SFSN), 145–170 (LSQL…NLTK), 172–192 (SILV…LLTL), 193–218 (PFLS…STSS), 220–241 (LEFM…ISKL), 242–265 (INLK…LFSS), 266–291 (FKSL…SKIP), 293–314 (NLEN…LKNL), 315–338 (TKLE…FWNL), 340–363 (RLRR…VLVN), and 364–387 (SSVR…PLSI). Residue asparagine 213 is glycosylated (N-linked (GlcNAc...) asparagine). N-linked (GlcNAc...) asparagine glycosylation occurs at asparagine 313. Asparagine 363 is a glycosylation site (N-linked (GlcNAc...) asparagine). One copy of the LRR 13; degenerate repeat lies at 388–407 (NLLSAWNNSFTGNIPLETCN). N-linked (GlcNAc...) asparagine glycans are attached at residues asparagine 394, asparagine 407, and asparagine 420. LRR repeat units follow at residues 408–434 (RSSL…DFQE), 436–456 (LIVV…IFSD), 457–481 (GALL…LLNC), 483–504 (MLRF…WLKA), 505–529 (LPDL…DRGP), 532–556 (FPKL…YFVN), 601–625 (LTSY…IGLL), 626–649 (KALI…LANV), 650–673 (TELE…LKTL), and 675–698 (FLAY…QITG). An N-linked (GlcNAc...) asparagine glycan is attached at asparagine 480. The N-linked (GlcNAc...) asparagine glycan is linked to asparagine 544. Asparagine 632 and asparagine 648 each carry an N-linked (GlcNAc...) asparagine glycan. A helical membrane pass occupies residues 741–761 (AVVIGYWPGLLLGLIMAHVIA). Residues 762-808 (SFKPKWLVKIVGPEKRKEDNPVRLFMTLDSRWDSFNNKKNVEQKSDM) lie on the Cytoplasmic side of the membrane.

It belongs to the RLP family.

The protein localises to the cell membrane. In Arabidopsis thaliana (Mouse-ear cress), this protein is Receptor like protein 27.